Consider the following 290-residue polypeptide: 33 kDa chaperonin (290 aa).

Disulfide bonds link Cys-235-Cys-237 and Cys-268-Cys-271.

The protein belongs to the HSP33 family. Post-translationally, under oxidizing conditions two disulfide bonds are formed involving the reactive cysteines. Under reducing conditions zinc is bound to the reactive cysteines and the protein is inactive.

Its subcellular location is the cytoplasm. Functionally, redox regulated molecular chaperone. Protects both thermally unfolding and oxidatively damaged proteins from irreversible aggregation. Plays an important role in the bacterial defense system toward oxidative stress. This is 33 kDa chaperonin from Streptococcus equi subsp. zooepidemicus (strain H70).